The primary structure comprises 310 residues: uncharacterized protein (310 aa).

3 disordered regions span residues 1–53, 78–127, and 153–217; these read MSNK…NKEM, PIEN…TITN, and QQPL…SQML. Over residues 11–25 the composition is skewed to acidic residues; the sequence is GEEDEEEDDLYDDYD. Composition is skewed to polar residues over residues 37–49 and 78–88; these read STSM…NISL and PIENINENPSP. 3 stretches are compositionally biased toward low complexity: residues 94–126, 164–184, and 192–208; these read QTQQ…TTIT, PSPI…QYIT, and YQPI…QIPT. Residues 268–299 are a coiled coil; it reads DLIKSVQHNIRQYNDDILTLEEKLEQTEWSLQ.

This is an uncharacterized protein from Dictyostelium discoideum (Social amoeba).